The primary structure comprises 149 residues: Oligosaccharyltransferase complex subunit ostc (149 aa).

Topologically, residues Met1 to Thr32 are cytoplasmic. A helical membrane pass occupies residues Val33–Ile53. Residues Val54–Tyr83 lie on the Extracellular side of the membrane. Residues Ile84–Leu104 form a helical membrane-spanning segment. At Asp105–Arg117 the chain is on the cytoplasmic side. Residues Phe118–Phe138 form a helical membrane-spanning segment. The Extracellular portion of the chain corresponds to Met139 to Gly149.

It belongs to the OSTC family. Specific component of the STT3A-containing form of the oligosaccharyltransferase (OST) complex.

Its subcellular location is the membrane. The protein operates within protein modification; protein glycosylation. In terms of biological role, specific component of the STT3A-containing form of the oligosaccharyl transferase (OST) complex that catalyzes the initial transfer of a defined glycan (Glc(3)Man(9)GlcNAc(2) in eukaryotes) from the lipid carrier dolichol-pyrophosphate to an asparagine residue within an Asn-X-Ser/Thr consensus motif in nascent polypeptide chains, the first step in protein N-glycosylation. N-glycosylation occurs cotranslationally and the complex associates with the Sec61 complex at the channel-forming translocon complex that mediates protein translocation across the endoplasmic reticulum (ER). All subunits are required for a maximal enzyme activity. In Danio rerio (Zebrafish), this protein is Oligosaccharyltransferase complex subunit ostc.